A 202-amino-acid polypeptide reads, in one-letter code: Na(+)-translocating NADH-quinone reductase subunit E (202 aa).

The next 6 helical transmembrane spans lie at 11 to 31 (AVFV…FIAI), 35 to 55 (VETA…TVPA), 81 to 101 (FLGL…LEML), 114 to 134 (GVFL…LFMV), 144 to 164 (TVYG…LAGI), and 180 to 200 (LGIT…FSGV).

The protein belongs to the NqrDE/RnfAE family. In terms of assembly, composed of six subunits; NqrA, NqrB, NqrC, NqrD, NqrE and NqrF.

Its subcellular location is the cell inner membrane. It carries out the reaction a ubiquinone + n Na(+)(in) + NADH + H(+) = a ubiquinol + n Na(+)(out) + NAD(+). Its function is as follows. NQR complex catalyzes the reduction of ubiquinone-1 to ubiquinol by two successive reactions, coupled with the transport of Na(+) ions from the cytoplasm to the periplasm. NqrA to NqrE are probably involved in the second step, the conversion of ubisemiquinone to ubiquinol. This is Na(+)-translocating NADH-quinone reductase subunit E from Pseudomonas aeruginosa (strain LESB58).